The primary structure comprises 495 residues: Phytochrome A type 5 (495 aa).

The segment covering 1–21 has biased composition (low complexity); sequence MSSSRPASSSSSRNRQSSQAR. The disordered stretch occupies residues 1-24; that stretch reads MSSSRPASSSSSRNRQSSQARVLA. Residues 217–402 enclose the GAF domain; it reads SMEMLCNTVV…VFAVHVNREF (186 aa). Cys-322 lines the phytochromobilin pocket.

Belongs to the phytochrome family. In terms of assembly, homodimer. In terms of processing, contains one covalently linked phytochromobilin chromophore.

In terms of biological role, regulatory photoreceptor which exists in two forms that are reversibly interconvertible by light: the Pr form that absorbs maximally in the red region of the spectrum and the Pfr form that absorbs maximally in the far-red region. Photoconversion of Pr to Pfr induces an array of morphogenic responses, whereas reconversion of Pfr to Pr cancels the induction of those responses. Pfr controls the expression of a number of nuclear genes including those encoding the small subunit of ribulose-bisphosphate carboxylase, chlorophyll A/B binding protein, protochlorophyllide reductase, rRNA, etc. It also controls the expression of its own gene(s) in a negative feedback fashion. The sequence is that of Phytochrome A type 5 (PHYA5) from Avena sativa (Oat).